Here is a 455-residue protein sequence, read N- to C-terminus: Phosphoglucosamine mutase (455 aa).

Serine 108 acts as the Phosphoserine intermediate in catalysis. Mg(2+) contacts are provided by serine 108, aspartate 246, aspartate 248, and aspartate 250. A Phosphoserine modification is found at serine 108.

It belongs to the phosphohexose mutase family. It depends on Mg(2+) as a cofactor. Activated by phosphorylation.

The enzyme catalyses alpha-D-glucosamine 1-phosphate = D-glucosamine 6-phosphate. Functionally, catalyzes the conversion of glucosamine-6-phosphate to glucosamine-1-phosphate. This is Phosphoglucosamine mutase from Frankia casuarinae (strain DSM 45818 / CECT 9043 / HFP020203 / CcI3).